A 35-amino-acid chain; its full sequence is Photosystem II reaction center protein M (35 aa).

A helical membrane pass occupies residues 7–27 (GFIATILFVLVPTVFLLILYI).

Belongs to the PsbM family. PSII is composed of 1 copy each of membrane proteins PsbA, PsbB, PsbC, PsbD, PsbE, PsbF, PsbH, PsbI, PsbJ, PsbK, PsbL, PsbM, PsbT, PsbX, PsbY, PsbZ, Psb30/Ycf12, peripheral proteins PsbO, CyanoQ (PsbQ), PsbU, PsbV and a large number of cofactors. It forms dimeric complexes.

It is found in the cellular thylakoid membrane. Functionally, one of the components of the core complex of photosystem II (PSII). PSII is a light-driven water:plastoquinone oxidoreductase that uses light energy to abstract electrons from H(2)O, generating O(2) and a proton gradient subsequently used for ATP formation. It consists of a core antenna complex that captures photons, and an electron transfer chain that converts photonic excitation into a charge separation. This subunit is found at the monomer-monomer interface. This is Photosystem II reaction center protein M from Gloeothece citriformis (strain PCC 7424) (Cyanothece sp. (strain PCC 7424)).